We begin with the raw amino-acid sequence, 757 residues long: Protein Lines homolog 1 (757 aa).

Phosphoserine is present on serine 635.

This sequence belongs to the protein lines family. As to expression, expressed in adult testis, prostate, prostate, spleen, thymus, skeletal muscle, fetal kidney and brain.

This chain is Protein Lines homolog 1, found in Homo sapiens (Human).